A 153-amino-acid chain; its full sequence is MSNQLNTMDIKEILKYLPHRYPFLLIDRVLDFTRGESLHAIKNVTINEPFFQGHFPVQPVMPGVLILEAMAQATGLLAFKTMSEEPSPNVLYYFAGIDKARFKRVVGPGDQIHFHVKMIKERRGIGVFIGEAYVDGELACSAEIMCARREISK.

The active site involves His-54.

Belongs to the thioester dehydratase family. FabZ subfamily.

It is found in the cytoplasm. It catalyses the reaction a (3R)-hydroxyacyl-[ACP] = a (2E)-enoyl-[ACP] + H2O. Involved in unsaturated fatty acids biosynthesis. Catalyzes the dehydration of short chain beta-hydroxyacyl-ACPs and long chain saturated and unsaturated beta-hydroxyacyl-ACPs. The sequence is that of 3-hydroxyacyl-[acyl-carrier-protein] dehydratase FabZ from Shewanella denitrificans (strain OS217 / ATCC BAA-1090 / DSM 15013).